A 404-amino-acid polypeptide reads, in one-letter code: XK-related protein 8 (404 aa).

8 helical membrane passes run 14–34, 44–64, 167–187, 206–226, 227–247, 263–283, 292–312, and 319–339; these read FVFS…DVWV, FFWF…VQMF, AVQF…VVDY, SLIY…ALAL, FASV…LVFV, GEWL…FNVA, AIYH…WWCC, and EPYA…GLLF.

The protein belongs to the XK family.

The protein resides in the cell membrane. It carries out the reaction a 1,2-diacyl-sn-glycero-3-phospho-L-serine(in) = a 1,2-diacyl-sn-glycero-3-phospho-L-serine(out). Functionally, phospholipid scramblase that promotes phosphatidylserine exposure on apoptotic cell surface, possibly by mediating phospholipid scrambling. Phosphatidylserine is a specific marker only present at the surface of apoptotic cells and acts as a specific signal for engulfment. This Tetraodon nigroviridis (Spotted green pufferfish) protein is XK-related protein 8.